The following is a 351-amino-acid chain: Biotin synthase (351 aa).

The 217-residue stretch at 49–265 folds into the Radical SAM core domain; it reads NRVRIHILDN…LSVFRLVNPD (217 aa). Positions 64, 68, and 71 each coordinate [4Fe-4S] cluster. The [2Fe-2S] cluster site is built by Cys-108, Cys-140, Cys-200, and Arg-269.

Belongs to the radical SAM superfamily. Biotin synthase family. Homodimer. Requires [4Fe-4S] cluster as cofactor. [2Fe-2S] cluster is required as a cofactor.

The enzyme catalyses (4R,5S)-dethiobiotin + (sulfur carrier)-SH + 2 reduced [2Fe-2S]-[ferredoxin] + 2 S-adenosyl-L-methionine = (sulfur carrier)-H + biotin + 2 5'-deoxyadenosine + 2 L-methionine + 2 oxidized [2Fe-2S]-[ferredoxin]. It participates in cofactor biosynthesis; biotin biosynthesis; biotin from 7,8-diaminononanoate: step 2/2. In terms of biological role, catalyzes the conversion of dethiobiotin (DTB) to biotin by the insertion of a sulfur atom into dethiobiotin via a radical-based mechanism. The protein is Biotin synthase of Leptospira biflexa serovar Patoc (strain Patoc 1 / Ames).